A 521-amino-acid chain; its full sequence is Cytochrome P450 1A1 (521 aa).

Substrate is bound at residue phenylalanine 229. A heme-binding site is contributed by cysteine 463.

This sequence belongs to the cytochrome P450 family. It depends on heme as a cofactor.

The protein resides in the endoplasmic reticulum membrane. It localises to the microsome membrane. It carries out the reaction an organic molecule + reduced [NADPH--hemoprotein reductase] + O2 = an alcohol + oxidized [NADPH--hemoprotein reductase] + H2O + H(+). Its function is as follows. Cytochromes P450 are a group of heme-thiolate monooxygenases. They oxidize a variety of structurally unrelated compounds, including steroids, fatty acids, and xenobiotics. The sequence is that of Cytochrome P450 1A1 (cyp1a1) from Limanda limanda (Common dab).